A 142-amino-acid chain; its full sequence is gSG7 salivary protein (142 aa).

An N-terminal signal peptide occupies residues 1–25 (METKLVLALIACGVICLLQTTPTEA). Disulfide bonds link Cys83–Cys138 and Cys106–Cys116.

In terms of assembly, interacts with host coagulation factor XII (F12) (inactive and activated). Interacts with host high molecular weight kininogen (KNG1) (inactive and activated).

The protein localises to the secreted. With respect to regulation, zn(2+) modulates binding to host coagulation factor XII (F12) and high molecular weight kininogen (KNG1). Its function is as follows. Salivary protein with anticoagulant activity. Inhibits activation of host kallikrein-kinin system by preventing the reciprocal activation of coagulation factor XII (F12) and prekallikrein (KLKB1), and subsequent release of bradykinin. Inhibits host factor XII and high molecular weight kininogen (KNG1) binding to negatively charged surfaces. Weakly inhibits the alternative pathway of complement system activation in the host. The chain is gSG7 salivary protein from Anopheles stephensi (Indo-Pakistan malaria mosquito).